The sequence spans 146 residues: Hemoglobin subunit beta (146 aa).

The 145-residue stretch at 2 to 146 (HWSAEEKQLI…VAHALARKYH (145 aa)) folds into the Globin domain. Histidine 63 and histidine 92 together coordinate heme b.

The protein belongs to the globin family. In terms of assembly, heterotetramer of two alpha chains and two beta chains. In terms of tissue distribution, red blood cells.

Its function is as follows. Involved in oxygen transport from the lung to the various peripheral tissues. The polypeptide is Hemoglobin subunit beta (HBB) (Phoenicopterus ruber (American flamingo)).